The following is a 250-amino-acid chain: F-box only protein 17 (250 aa).

The 48-residue stretch at 15–62 folds into the F-box domain; it reads HMALAELPPELLLQVLSHVPPRALVTRCRPVCRAWRDLVDGPSVWLLQ. In terms of domain architecture, FBA spans 99–250; the sequence is FCLLAPLGRN…GLLQGLSRLH (152 aa).

As to quaternary structure, part of a SCF (SKP1-cullin-F-box) protein ligase complex. Interacts with SKP1 and CUL1.

Substrate-recognition component of the SCF (SKP1-CUL1-F-box protein)-type E3 ubiquitin ligase complex. Able to recognize and bind denatured glycoproteins, which are modified with complex-type oligosaccharides. Also recognizes sulfated glycans. Does not bind high-mannose glycoproteins. In Rattus norvegicus (Rat), this protein is F-box only protein 17 (Fbxo17).